We begin with the raw amino-acid sequence, 1100 residues long: Exportin-T (1100 aa).

It belongs to the exportin family. In terms of assembly, interacts with CEX1, GSP1, GSP2, NSP1, NUP2 and UTP8.

The protein resides in the nucleus. The protein localises to the cytoplasm. In terms of biological role, tRNA nucleus export receptor which facilitates tRNA translocation across the nuclear pore complex. Preferentially interacts with tRNAs with mature 5'- and 3'-termini and does not distinguish between intron-containing and spliced tRNAs. In the nucleus binds to tRNA and to the Ran-GTPases GSP1 or GSP2 in their active GTP-bound form. Docking of this trimeric complex to the nuclear pore complex (NPC) is mediated through binding to nucleoporins. Upon transit of a nuclear export complex into the cytoplasm, disassembling of the complex and hydrolysis of Ran-GTP to Ran-GDP cause release of the tRNA from the export receptor. The directionality of nuclear export is thought to be conferred by an asymmetric distribution of the GTP- and GDP-bound forms of Ran between the cytoplasm and nucleus. The sequence is that of Exportin-T (LOS1) from Saccharomyces cerevisiae (strain ATCC 204508 / S288c) (Baker's yeast).